A 194-amino-acid polypeptide reads, in one-letter code: MILPIVGYGDPVLRKVCEEITKDYINLEETIANMYETMYNACGVGLAAPQVGLPIRLFIVDADPFSDSDDISKEEAAALKGFKKTFINAKMLKEEGEEWSFSEGCLSIPDVREDVYRNPNITIEYYDENFNKKTEEYNGLIARVIQHEYDHIEGVLFTDKITVFKKQFIKKKLQNIMEGKARPDYRMKLVPKKR.

Fe cation contacts are provided by Cys105 and His147. Glu148 is an active-site residue. Residue His151 participates in Fe cation binding.

The protein belongs to the polypeptide deformylase family. Requires Fe(2+) as cofactor.

The enzyme catalyses N-terminal N-formyl-L-methionyl-[peptide] + H2O = N-terminal L-methionyl-[peptide] + formate. Its function is as follows. Removes the formyl group from the N-terminal Met of newly synthesized proteins. Requires at least a dipeptide for an efficient rate of reaction. N-terminal L-methionine is a prerequisite for activity but the enzyme has broad specificity at other positions. The sequence is that of Peptide deformylase from Flavobacterium psychrophilum (strain ATCC 49511 / DSM 21280 / CIP 103535 / JIP02/86).